Consider the following 345-residue polypeptide: tRNA-specific 2-thiouridylase MnmA 1 (345 aa).

ATP contacts are provided by residues 9–16 (GMSGGIDS) and Leu-35. Cys-96 serves as the catalytic Nucleophile. A disulfide bridge links Cys-96 with Cys-191. Residue Gly-120 participates in ATP binding. Residues 138–140 (KDQ) form an interaction with tRNA region. Cys-191 acts as the Cysteine persulfide intermediate in catalysis. Positions 293–294 (RY) are interaction with tRNA.

It belongs to the MnmA/TRMU family.

The protein localises to the cytoplasm. It catalyses the reaction S-sulfanyl-L-cysteinyl-[protein] + uridine(34) in tRNA + AH2 + ATP = 2-thiouridine(34) in tRNA + L-cysteinyl-[protein] + A + AMP + diphosphate + H(+). Its function is as follows. Catalyzes the 2-thiolation of uridine at the wobble position (U34) of tRNA, leading to the formation of s(2)U34. The polypeptide is tRNA-specific 2-thiouridylase MnmA 1 (Aliarcobacter butzleri (strain RM4018) (Arcobacter butzleri)).